We begin with the raw amino-acid sequence, 291 residues long: tRNA dimethylallyltransferase (291 aa).

17–24 (GPTASGKS) is an ATP binding site. 19-24 (TASGKS) contributes to the substrate binding site.

Belongs to the IPP transferase family. Monomer. The cofactor is Mg(2+).

It carries out the reaction adenosine(37) in tRNA + dimethylallyl diphosphate = N(6)-dimethylallyladenosine(37) in tRNA + diphosphate. Catalyzes the transfer of a dimethylallyl group onto the adenine at position 37 in tRNAs that read codons beginning with uridine, leading to the formation of N6-(dimethylallyl)adenosine (i(6)A). The polypeptide is tRNA dimethylallyltransferase (Cereibacter sphaeroides (strain ATCC 17025 / ATH 2.4.3) (Rhodobacter sphaeroides)).